The sequence spans 32 residues: ilv operon leader peptide (32 aa).

The polypeptide is ilv operon leader peptide (ilvL) (Yersinia pestis).